The sequence spans 351 residues: Putative aryl-alcohol dehydrogenase C977.14c (351 aa).

Ser113 carries the phosphoserine modification.

The protein belongs to the aldo/keto reductase family. Aldo/keto reductase 2 subfamily.

The protein resides in the cytoplasm. Its subcellular location is the nucleus. The sequence is that of Putative aryl-alcohol dehydrogenase C977.14c from Schizosaccharomyces pombe (strain 972 / ATCC 24843) (Fission yeast).